Reading from the N-terminus, the 142-residue chain is Hemoglobin subunit beta-2 (142 aa).

Residues 2–142 (SLTDEEKHLI…VTEALSCQYH (141 aa)) form the Globin domain. Heme b-binding residues include histidine 59 and histidine 88.

Belongs to the globin family. As to quaternary structure, heterotetramer of two alpha chains and two beta chains. Red blood cells.

Its function is as follows. Involved in oxygen transport from the lung to the various peripheral tissues. This chain is Hemoglobin subunit beta-2 (HBB2), found in Torpedo marmorata (Marbled electric ray).